The following is a 550-amino-acid chain: Chaperonin GroEL (550 aa).

ATP is bound by residues 30-33 (TLGP), Lys51, 87-91 (DGTTT), Gly415, and Asp497.

Belongs to the chaperonin (HSP60) family. Forms a cylinder of 14 subunits composed of two heptameric rings stacked back-to-back. Interacts with the co-chaperonin GroES.

It is found in the cytoplasm. The enzyme catalyses ATP + H2O + a folded polypeptide = ADP + phosphate + an unfolded polypeptide.. Together with its co-chaperonin GroES, plays an essential role in assisting protein folding. The GroEL-GroES system forms a nano-cage that allows encapsulation of the non-native substrate proteins and provides a physical environment optimized to promote and accelerate protein folding. This chain is Chaperonin GroEL, found in Yersinia enterocolitica serotype O:8 / biotype 1B (strain NCTC 13174 / 8081).